Here is a 123-residue protein sequence, read N- to C-terminus: Ig heavy chain V region HPCG13 (123 aa).

In terms of domain architecture, Ig-like spans 1 to 114 (EVKLVESGGG…GSYWYFDVWG (114 aa)).

The chain is Ig heavy chain V region HPCG13 from Mus musculus (Mouse).